The following is a 455-amino-acid chain: Probable glycine dehydrogenase (decarboxylating) subunit 1 (455 aa).

It belongs to the GcvP family. N-terminal subunit subfamily. In terms of assembly, the glycine cleavage system is composed of four proteins: P, T, L and H. In this organism, the P 'protein' is a heterodimer of two subunits.

It carries out the reaction N(6)-[(R)-lipoyl]-L-lysyl-[glycine-cleavage complex H protein] + glycine + H(+) = N(6)-[(R)-S(8)-aminomethyldihydrolipoyl]-L-lysyl-[glycine-cleavage complex H protein] + CO2. The glycine cleavage system catalyzes the degradation of glycine. The P protein binds the alpha-amino group of glycine through its pyridoxal phosphate cofactor; CO(2) is released and the remaining methylamine moiety is then transferred to the lipoamide cofactor of the H protein. This is Probable glycine dehydrogenase (decarboxylating) subunit 1 from Saccharolobus islandicus (strain Y.N.15.51 / Yellowstone #2) (Sulfolobus islandicus).